A 336-amino-acid polypeptide reads, in one-letter code: Dihydroorotate dehydrogenase (quinone) (336 aa).

FMN-binding positions include Ala-62 to Lys-66 and Thr-86. Substrate is bound at residue Lys-66. Asn-111 to Phe-115 is a binding site for substrate. FMN contacts are provided by Asn-139 and Asn-172. Asn-172 contacts substrate. Ser-175 functions as the Nucleophile in the catalytic mechanism. Asn-177 lines the substrate pocket. FMN is bound by residues Lys-217 and Thr-245. Position 246-247 (Asn-246–Thr-247) interacts with substrate. FMN-binding positions include Gly-268, Gly-297, and Phe-318–Ser-319.

The protein belongs to the dihydroorotate dehydrogenase family. Type 2 subfamily. Monomer. The cofactor is FMN.

Its subcellular location is the cell membrane. It catalyses the reaction (S)-dihydroorotate + a quinone = orotate + a quinol. The protein operates within pyrimidine metabolism; UMP biosynthesis via de novo pathway; orotate from (S)-dihydroorotate (quinone route): step 1/1. Its function is as follows. Catalyzes the conversion of dihydroorotate to orotate with quinone as electron acceptor. This chain is Dihydroorotate dehydrogenase (quinone), found in Photorhabdus laumondii subsp. laumondii (strain DSM 15139 / CIP 105565 / TT01) (Photorhabdus luminescens subsp. laumondii).